A 485-amino-acid polypeptide reads, in one-letter code: Rop guanine nucleotide exchange factor 2 (485 aa).

The tract at residues 1-36 is disordered; that stretch reads MENLPNHEENDDVGYHQSPGPIDPNDHSASETPVYS. The PRONE domain occupies 107-485; that stretch reads LAVQEISEPE…YVDKTMRGEE (379 aa).

As to quaternary structure, interacts with ARC10/ROP11. In terms of tissue distribution, expressed in the vascular tissues of roots, leaves, sepals, petals and siliques.

Functionally, guanine-nucleotide exchange factor (GEF) that acts as an activator of Rop (Rho of plants) GTPases by promoting the exchange of GDP for GTP. The protein is Rop guanine nucleotide exchange factor 2 (ROPGEF2) of Arabidopsis thaliana (Mouse-ear cress).